The sequence spans 203 residues: Sec-independent protein translocase protein TatB (203 aa).

A helical membrane pass occupies residues 1 to 21 (MFDIGWTELLVIAVVLIVVVG). Residues 179–203 (KPKRTTAVRKPATLKKPAQTKKDEA) are disordered.

It belongs to the TatB family. The Tat system comprises two distinct complexes: a TatABC complex, containing multiple copies of TatA, TatB and TatC subunits, and a separate TatA complex, containing only TatA subunits. Substrates initially bind to the TatABC complex, which probably triggers association of the separate TatA complex to form the active translocon.

The protein resides in the cell inner membrane. In terms of biological role, part of the twin-arginine translocation (Tat) system that transports large folded proteins containing a characteristic twin-arginine motif in their signal peptide across membranes. Together with TatC, TatB is part of a receptor directly interacting with Tat signal peptides. TatB may form an oligomeric binding site that transiently accommodates folded Tat precursor proteins before their translocation. The polypeptide is Sec-independent protein translocase protein TatB (Rhizobium johnstonii (strain DSM 114642 / LMG 32736 / 3841) (Rhizobium leguminosarum bv. viciae)).